Here is a 358-residue protein sequence, read N- to C-terminus: Peptide chain release factor 1 (358 aa).

Gln-232 bears the N5-methylglutamine mark.

Belongs to the prokaryotic/mitochondrial release factor family. Post-translationally, methylated by PrmC. Methylation increases the termination efficiency of RF1.

The protein resides in the cytoplasm. Its function is as follows. Peptide chain release factor 1 directs the termination of translation in response to the peptide chain termination codons UAG and UAA. The sequence is that of Peptide chain release factor 1 from Acidobacterium capsulatum (strain ATCC 51196 / DSM 11244 / BCRC 80197 / JCM 7670 / NBRC 15755 / NCIMB 13165 / 161).